We begin with the raw amino-acid sequence, 72 residues long: ATP synthase subunit c (72 aa).

The next 2 membrane-spanning stretches (helical) occupy residues 1–21 and 48–68; these read MSLG…GAGI and MFIG…FSFI.

The protein belongs to the ATPase C chain family. In terms of assembly, F-type ATPases have 2 components, F(1) - the catalytic core - and F(0) - the membrane proton channel. F(1) has five subunits: alpha(3), beta(3), gamma(1), delta(1), epsilon(1). F(0) has three main subunits: a(1), b(2) and c(10-14). The alpha and beta chains form an alternating ring which encloses part of the gamma chain. F(1) is attached to F(0) by a central stalk formed by the gamma and epsilon chains, while a peripheral stalk is formed by the delta and b chains.

It is found in the cell membrane. F(1)F(0) ATP synthase produces ATP from ADP in the presence of a proton or sodium gradient. F-type ATPases consist of two structural domains, F(1) containing the extramembraneous catalytic core and F(0) containing the membrane proton channel, linked together by a central stalk and a peripheral stalk. During catalysis, ATP synthesis in the catalytic domain of F(1) is coupled via a rotary mechanism of the central stalk subunits to proton translocation. Functionally, key component of the F(0) channel; it plays a direct role in translocation across the membrane. A homomeric c-ring of between 10-14 subunits forms the central stalk rotor element with the F(1) delta and epsilon subunits. The chain is ATP synthase subunit c from Bacillus caldotenax.